The primary structure comprises 700 residues: Protein UL29/28 (700 aa).

The disordered stretch occupies residues 1 to 30 (MSGRRKGCSAATASSSSSSPPSRLPLPGHA). Low complexity predominate over residues 9–21 (SAATASSSSSSPP).

The protein belongs to the herpesviridae US22 family. In terms of assembly, interacts with UL38 and host HDAC1; these interactions are necessary for the HDAC1 interaction with UL38. Interacts with host MTA2.

The protein localises to the virion. The protein resides in the host nucleus. Its subcellular location is the host cytoplasm. In terms of biological role, contributes to activation of immediate-early gene expression. The protein is Protein UL29/28 (UL29) of Human cytomegalovirus (strain Merlin) (HHV-5).